We begin with the raw amino-acid sequence, 360 residues long: Dynein intermediate light chain dil1 (360 aa).

The protein belongs to the dynein light intermediate chain DYN3 family. In terms of assembly, the dynein complex consists of at least two heavy chains and a number of intermediate and light chains. Interacts with rga3, sec10, sec16, syp1, rvb2, spbc19c7.04c, spbc2f12.05 and spac3a11.10c. In terms of processing, the N-terminal part is acetylated.

It localises to the cytoplasm. The protein resides in the cytoskeleton. Component of the cytoplasmic dynein which acts as a motor for the intracellular retrograde motility of vesicles and organelles along microtubules. Promotes oscillatory nuclear movement and efficient pairing of homologous centromeres during meiotic prophase. This is Dynein intermediate light chain dil1 (dil1) from Schizosaccharomyces pombe (strain 972 / ATCC 24843) (Fission yeast).